The primary structure comprises 482 residues: Interferon-induced protein with tetratricopeptide repeats 5 (482 aa).

TPR repeat units lie at residues 51-84, 94-127, 138-173, 181-214, 249-282, 338-371, 376-410, and 435-468; these read LALY…IQQE, LVTW…CKKL, PETD…EPDN, AITV…NPDN, PYVL…TPTS, AFAY…ENIT, HQIH…KDRS, and VQSL…DPEN. The tract at residues 254 to 260 is interaction with the 5'-triphosphate group of PPP-RNA; it reads YAAKFYR.

The protein belongs to the IFIT family. In terms of assembly, monomer. Interacts with MAP3K7 and the components of the IKK core complex CHUK, IKBKB and IKBKG; the interaction synergizes the recruitment of IKK to MAP3K7 and enhances IKK phosphorylation.

It is found in the cell projection. The protein localises to the ruffle membrane. Interferon-induced RNA-binding protein involved in the human innate immune response. Has a broad and adaptable RNA structure recognition important for RNA recognition specificity in antiviral defense. Binds precursor and processed tRNAs as well as poly-U-tailed tRNA fragments. Specifically binds single-stranded RNA bearing a 5'-triphosphate group (PPP-RNA), thereby acting as a sensor of viral single-stranded RNAs. Single-stranded PPP-RNAs, which lack 2'-O-methylation of the 5' cap and bear a 5'-triphosphate group instead, are specific from viruses, providing a molecular signature to distinguish between self and non-self mRNAs by the host during viral infection. Directly binds PPP-RNA in a non-sequence-specific manner. Also recognizes and selectively binds AT-rich dsDNA. Additionally, as a mediator in innate immunity, positively regulates IKK-NFKB signaling by sinergizing the recruitment of IKK to MAP3K7. This chain is Interferon-induced protein with tetratricopeptide repeats 5 (IFIT5), found in Homo sapiens (Human).